The sequence spans 177 residues: Large ribosomal subunit protein uL6 (177 aa).

The protein belongs to the universal ribosomal protein uL6 family. In terms of assembly, part of the 50S ribosomal subunit.

In terms of biological role, this protein binds to the 23S rRNA, and is important in its secondary structure. It is located near the subunit interface in the base of the L7/L12 stalk, and near the tRNA binding site of the peptidyltransferase center. This is Large ribosomal subunit protein uL6 from Aeromonas salmonicida (strain A449).